The chain runs to 112 residues: ATP synthase epsilon chain (112 aa).

It belongs to the ATPase epsilon chain family. F-type ATPases have 2 components, CF(1) - the catalytic core - and CF(0) - the membrane proton channel. CF(1) has five subunits: alpha(3), beta(3), gamma(1), delta(1), epsilon(1). CF(0) has three main subunits: a, b and c.

It localises to the cell inner membrane. Functionally, produces ATP from ADP in the presence of a proton gradient across the membrane. The chain is ATP synthase epsilon chain from Rickettsia rickettsii (strain Sheila Smith).